The primary structure comprises 226 residues: ATP synthase F(0) complex subunit a (226 aa).

Transmembrane regions (helical) follow at residues 14–34 (ILGI…FSAP), 68–88 (WTLM…LGLL), 97–117 (QLSM…LMGF), 138–158 (IPML…ALAV), 164–184 (ITAG…LSSI), and 193–213 (FTIL…QAYV).

The protein belongs to the ATPase A chain family. As to quaternary structure, component of the ATP synthase complex composed at least of ATP5F1A/subunit alpha, ATP5F1B/subunit beta, ATP5MC1/subunit c (homooctomer), MT-ATP6/subunit a, MT-ATP8/subunit 8, ATP5ME/subunit e, ATP5MF/subunit f, ATP5MG/subunit g, ATP5MK/subunit k, ATP5MJ/subunit j, ATP5F1C/subunit gamma, ATP5F1D/subunit delta, ATP5F1E/subunit epsilon, ATP5PF/subunit F6, ATP5PB/subunit b, ATP5PD/subunit d, ATP5PO/subunit OSCP. ATP synthase complex consists of a soluble F(1) head domain (subunits alpha(3) and beta(3)) - the catalytic core - and a membrane F(0) domain - the membrane proton channel (subunits c, a, 8, e, f, g, k and j). These two domains are linked by a central stalk (subunits gamma, delta, and epsilon) rotating inside the F1 region and a stationary peripheral stalk (subunits F6, b, d, and OSCP). Interacts with DNAJC30; interaction is direct.

It is found in the mitochondrion inner membrane. The enzyme catalyses H(+)(in) = H(+)(out). In terms of biological role, subunit a, of the mitochondrial membrane ATP synthase complex (F(1)F(0) ATP synthase or Complex V) that produces ATP from ADP in the presence of a proton gradient across the membrane which is generated by electron transport complexes of the respiratory chain. ATP synthase complex consist of a soluble F(1) head domain - the catalytic core - and a membrane F(1) domain - the membrane proton channel. These two domains are linked by a central stalk rotating inside the F(1) region and a stationary peripheral stalk. During catalysis, ATP synthesis in the catalytic domain of F(1) is coupled via a rotary mechanism of the central stalk subunits to proton translocation. With the subunit c (ATP5MC1), forms the proton-conducting channel in the F(0) domain, that contains two crucial half-channels (inlet and outlet) that facilitate proton movement from the mitochondrial intermembrane space (IMS) into the matrix. Protons are taken up via the inlet half-channel and released through the outlet half-channel, following a Grotthuss mechanism. This chain is ATP synthase F(0) complex subunit a, found in Tachyglossus aculeatus aculeatus (Southeast Australian short-beaked echidna).